The following is a 399-amino-acid chain: Acetate kinase (399 aa).

N10 serves as a coordination point for Mg(2+). K17 contributes to the ATP binding site. Position 91 (R91) interacts with substrate. Residue D148 is the Proton donor/acceptor of the active site. ATP-binding positions include 208–212, 283–285, and 331–335; these read HLGNG, DCR, and GIGEN. Residue E385 participates in Mg(2+) binding.

It belongs to the acetokinase family. In terms of assembly, homodimer. Mg(2+) is required as a cofactor. Requires Mn(2+) as cofactor.

The protein localises to the cytoplasm. It catalyses the reaction acetate + ATP = acetyl phosphate + ADP. The protein operates within metabolic intermediate biosynthesis; acetyl-CoA biosynthesis; acetyl-CoA from acetate: step 1/2. Catalyzes the formation of acetyl phosphate from acetate and ATP. Can also catalyze the reverse reaction. This Shewanella oneidensis (strain ATCC 700550 / JCM 31522 / CIP 106686 / LMG 19005 / NCIMB 14063 / MR-1) protein is Acetate kinase.